A 155-amino-acid polypeptide reads, in one-letter code: Putative methyl-CpG-binding domain protein 12 (155 aa).

A CW-type zinc finger spans residues 1–53 (MVQCTDCKKWRLIPSMQHYNIIKETQLQTPFVCGTTSGWTPNMSCNVPQDGTT). The MBD-associated domain (MAD) signature appears at 3-45 (QCTDCKKWRLIPSMQHYNIIKETQLQTPFVCGTTSGWTPNMSC). Zn(2+)-binding residues include C4, C7, C33, and C45. The MBD domain maps to 53–126 (TCDTWPSIPP…SQFSFQIPKP (74 aa)). Residues 130-155 (NYVKKRTRPVKRRKSSKDNNCEKGKK) are disordered. Positions 133–144 (KKRTRPVKRRKS) are enriched in basic residues. The short motif at 140-147 (KRRKSSKD) is the Nuclear localization signal element. Residues 145–155 (SKDNNCEKGKK) are compositionally biased toward basic and acidic residues.

The protein resides in the nucleus. In terms of biological role, probable transcriptional regulator. The protein is Putative methyl-CpG-binding domain protein 12 (MBD12) of Arabidopsis thaliana (Mouse-ear cress).